Reading from the N-terminus, the 314-residue chain is 4-diphosphocytidyl-2-C-methyl-D-erythritol kinase (314 aa).

K11 is an active-site residue. An ATP-binding site is contributed by 99–109 (PMAAGLAGGST). The active site involves D141.

The protein belongs to the GHMP kinase family. IspE subfamily.

It catalyses the reaction 4-CDP-2-C-methyl-D-erythritol + ATP = 4-CDP-2-C-methyl-D-erythritol 2-phosphate + ADP + H(+). It participates in isoprenoid biosynthesis; isopentenyl diphosphate biosynthesis via DXP pathway; isopentenyl diphosphate from 1-deoxy-D-xylulose 5-phosphate: step 3/6. Functionally, catalyzes the phosphorylation of the position 2 hydroxy group of 4-diphosphocytidyl-2C-methyl-D-erythritol. This Trichodesmium erythraeum (strain IMS101) protein is 4-diphosphocytidyl-2-C-methyl-D-erythritol kinase.